Reading from the N-terminus, the 357-residue chain is Homoserine kinase (357 aa).

Lys-133 participates in a covalent cross-link: Glycyl lysine isopeptide (Lys-Gly) (interchain with G-Cter in ubiquitin).

This sequence belongs to the GHMP kinase family. Homoserine kinase subfamily. Homodimer.

The catalysed reaction is L-homoserine + ATP = O-phospho-L-homoserine + ADP + H(+). It functions in the pathway amino-acid biosynthesis; L-threonine biosynthesis; L-threonine from L-aspartate: step 4/5. In terms of biological role, commits homoserine to the threonine biosynthesis pathway by catalyzing its O-phosphorylation. The polypeptide is Homoserine kinase (THR1) (Saccharomyces cerevisiae (strain ATCC 204508 / S288c) (Baker's yeast)).